The following is an 891-amino-acid chain: Alanine--tRNA ligase (891 aa).

4 residues coordinate Zn(2+): His564, His568, Cys681, and His685.

Belongs to the class-II aminoacyl-tRNA synthetase family. Zn(2+) serves as cofactor.

It localises to the cytoplasm. The enzyme catalyses tRNA(Ala) + L-alanine + ATP = L-alanyl-tRNA(Ala) + AMP + diphosphate. Functionally, catalyzes the attachment of alanine to tRNA(Ala) in a two-step reaction: alanine is first activated by ATP to form Ala-AMP and then transferred to the acceptor end of tRNA(Ala). Also edits incorrectly charged Ser-tRNA(Ala) and Gly-tRNA(Ala) via its editing domain. The protein is Alanine--tRNA ligase of Methylorubrum extorquens (strain PA1) (Methylobacterium extorquens).